The chain runs to 178 residues: Cytochrome b6-f complex iron-sulfur subunit (178 aa).

A helical transmembrane segment spans residues 20–42 (LLTFGTATGVALGALYPVANFFM). The region spanning 71–161 (NHPAGDRSLV…IDIDDDNVLV (91 aa)) is the Rieske domain. [2Fe-2S] cluster-binding residues include Cys-107, His-109, Cys-125, and His-128. A disulfide bond links Cys-112 and Cys-127.

The protein belongs to the Rieske iron-sulfur protein family. In terms of assembly, the 4 large subunits of the cytochrome b6-f complex are cytochrome b6, subunit IV (17 kDa polypeptide, PetD), cytochrome f and the Rieske protein, while the 4 small subunits are PetG, PetL, PetM and PetN. The complex functions as a dimer. [2Fe-2S] cluster is required as a cofactor.

The protein resides in the cellular thylakoid membrane. It carries out the reaction 2 oxidized [plastocyanin] + a plastoquinol + 2 H(+)(in) = 2 reduced [plastocyanin] + a plastoquinone + 4 H(+)(out). In terms of biological role, component of the cytochrome b6-f complex, which mediates electron transfer between photosystem II (PSII) and photosystem I (PSI), cyclic electron flow around PSI, and state transitions. The sequence is that of Cytochrome b6-f complex iron-sulfur subunit from Prochlorococcus marinus (strain SARG / CCMP1375 / SS120).